The primary structure comprises 178 residues: ATP synthase subunit delta (178 aa).

Belongs to the ATPase delta chain family. In terms of assembly, F-type ATPases have 2 components, F(1) - the catalytic core - and F(0) - the membrane proton channel. F(1) has five subunits: alpha(3), beta(3), gamma(1), delta(1), epsilon(1). F(0) has three main subunits: a(1), b(2) and c(10-14). The alpha and beta chains form an alternating ring which encloses part of the gamma chain. F(1) is attached to F(0) by a central stalk formed by the gamma and epsilon chains, while a peripheral stalk is formed by the delta and b chains.

It localises to the cell inner membrane. F(1)F(0) ATP synthase produces ATP from ADP in the presence of a proton or sodium gradient. F-type ATPases consist of two structural domains, F(1) containing the extramembraneous catalytic core and F(0) containing the membrane proton channel, linked together by a central stalk and a peripheral stalk. During catalysis, ATP synthesis in the catalytic domain of F(1) is coupled via a rotary mechanism of the central stalk subunits to proton translocation. In terms of biological role, this protein is part of the stalk that links CF(0) to CF(1). It either transmits conformational changes from CF(0) to CF(1) or is implicated in proton conduction. The polypeptide is ATP synthase subunit delta (Acinetobacter baumannii (strain AB307-0294)).